A 237-amino-acid chain; its full sequence is Peroxisomal membrane protein 11-1 (237 aa).

Residues 1–92 (MSTLDATRAE…TLVLLGKSKN (92 aa)) lie on the Cytoplasmic side of the membrane. A helical membrane pass occupies residues 93–113 (ALLSTFLFLDQFVWLGRTGIY). At 114–204 (KNKERTDRIV…VGLLQLSPKK (91 aa)) the chain is on the lumenal side. A helical membrane pass occupies residues 205–223 (ITPRVTGAFGFVTSLISCY). Topologically, residues 224–237 (QQLPSRAPAIKVKA) are cytoplasmic.

The protein belongs to the peroxin-11 family. Expressed in seedlings, leaf sheaths, flag leaf, panicles and spikelets.

The protein localises to the peroxisome membrane. In terms of biological role, involved in peroxisomal proliferation. This Oryza sativa subsp. japonica (Rice) protein is Peroxisomal membrane protein 11-1 (PEX11-1).